The following is a 318-amino-acid chain: uncharacterized protein (318 aa).

It belongs to the NAD(P)-dependent epimerase/dehydratase family.

This is an uncharacterized protein from Staphylococcus haemolyticus (strain JCSC1435).